A 367-amino-acid polypeptide reads, in one-letter code: Fructose-1,6-bisphosphatase class 1 3 (367 aa).

Belongs to the FBPase class 1 family. In terms of assembly, homotetramer.

It localises to the cytoplasm. The enzyme catalyses beta-D-fructose 1,6-bisphosphate + H2O = beta-D-fructose 6-phosphate + phosphate. The protein operates within carbohydrate biosynthesis; gluconeogenesis. The sequence is that of Fructose-1,6-bisphosphatase class 1 3 from Paraburkholderia phymatum (strain DSM 17167 / CIP 108236 / LMG 21445 / STM815) (Burkholderia phymatum).